The sequence spans 326 residues: tRNA-modifying protein YgfZ (326 aa).

2 residues coordinate folate: Trp-27 and Trp-189.

The protein belongs to the tRNA-modifying YgfZ family.

It is found in the cytoplasm. Functionally, folate-binding protein involved in regulating the level of ATP-DnaA and in the modification of some tRNAs. It is probably a key factor in regulatory networks that act via tRNA modification, such as initiation of chromosomal replication. This is tRNA-modifying protein YgfZ from Escherichia coli O157:H7 (strain EC4115 / EHEC).